A 77-amino-acid polypeptide reads, in one-letter code: Cell division topological specificity factor (77 aa).

It belongs to the MinE family.

In terms of biological role, prevents the cell division inhibition by proteins MinC and MinD at internal division sites while permitting inhibition at polar sites. This ensures cell division at the proper site by restricting the formation of a division septum at the midpoint of the long axis of the cell. The sequence is that of Cell division topological specificity factor from Helicobacter pylori (strain Shi470).